Consider the following 115-residue polypeptide: Inner membrane protein YidH (115 aa).

The Cytoplasmic portion of the chain corresponds to 1–30; that stretch reads MKISRLGEAPDYRFSLANERTFLAWIRTAL. A helical transmembrane segment spans residues 31–51; sequence GFLAAGVGLDQLAPDFATPVI. Over 52–53 the chain is Periplasmic; the sequence is RE. A helical transmembrane segment spans residues 54 to 74; the sequence is LLALLLCLFSGGLAMYGYLRW. Over 75–92 the chain is Cytoplasmic; the sequence is LRNEKAMRLKEDLPYTNS. The chain crosses the membrane as a helical span at residues 93 to 113; sequence LLIISLILMVVAVIVMGLVLY. Residues 114 to 115 are Periplasmic-facing; that stretch reads AG.

To M.tuberculosis Rv2272.

The protein localises to the cell inner membrane. This is Inner membrane protein YidH (yidH) from Escherichia coli O157:H7.